Consider the following 451-residue polypeptide: Eukaryotic translation initiation factor 3 subunit E (451 aa).

Residues 245–425 (PFFNHEPARD…GTVVMNHPPS (181 aa)) form the PCI domain.

This sequence belongs to the eIF-3 subunit E family. Component of the eukaryotic translation initiation factor 3 (eIF-3) complex.

The protein resides in the cytoplasm. Functionally, component of the eukaryotic translation initiation factor 3 (eIF-3) complex, which is involved in protein synthesis of a specialized repertoire of mRNAs and, together with other initiation factors, stimulates binding of mRNA and methionyl-tRNAi to the 40S ribosome. The eIF-3 complex specifically targets and initiates translation of a subset of mRNAs involved in cell proliferation. This is Eukaryotic translation initiation factor 3 subunit E (int6) from Sclerotinia sclerotiorum (strain ATCC 18683 / 1980 / Ss-1) (White mold).